A 158-amino-acid polypeptide reads, in one-letter code: Large ribosomal subunit protein uL15 (158 aa).

Over residues 1–13 the composition is skewed to basic and acidic residues; the sequence is MKLNEIKDNEGST. Positions 1–45 are disordered; the sequence is MKLNEIKDNEGSTHSRKRLGRGIGSGSGKTGGRGVKGQKSRSGVA. The span at 21 to 35 shows a compositional bias: gly residues; it reads RGIGSGSGKTGGRGV.

The protein belongs to the universal ribosomal protein uL15 family. Part of the 50S ribosomal subunit.

Its function is as follows. Binds to the 23S rRNA. The chain is Large ribosomal subunit protein uL15 from Rhizobium leguminosarum bv. trifolii (strain WSM2304).